A 155-amino-acid polypeptide reads, in one-letter code: Ribosomal RNA large subunit methyltransferase H (155 aa).

S-adenosyl-L-methionine contacts are provided by residues Leu-73, Gly-104, and Leu-123 to Leu-128.

It belongs to the RNA methyltransferase RlmH family. As to quaternary structure, homodimer.

It is found in the cytoplasm. It carries out the reaction pseudouridine(1915) in 23S rRNA + S-adenosyl-L-methionine = N(3)-methylpseudouridine(1915) in 23S rRNA + S-adenosyl-L-homocysteine + H(+). Functionally, specifically methylates the pseudouridine at position 1915 (m3Psi1915) in 23S rRNA. The polypeptide is Ribosomal RNA large subunit methyltransferase H (Pseudomonas aeruginosa (strain LESB58)).